Here is a 292-residue protein sequence, read N- to C-terminus: Small ribosomal subunit biogenesis GTPase RsgA (292 aa).

A CP-type G domain is found at 64–221 (RSELFRPAVA…LVDTPGFSSL (158 aa)). GTP-binding positions include 113 to 116 (NKMD) and 164 to 172 (GPSGVGKST). Zn(2+)-binding residues include Cys-245, Cys-250, His-252, and Cys-258.

Belongs to the TRAFAC class YlqF/YawG GTPase family. RsgA subfamily. Monomer. Associates with 30S ribosomal subunit, binds 16S rRNA. Zn(2+) serves as cofactor.

It is found in the cytoplasm. In terms of biological role, one of several proteins that assist in the late maturation steps of the functional core of the 30S ribosomal subunit. Helps release RbfA from mature subunits. May play a role in the assembly of ribosomal proteins into the subunit. Circularly permuted GTPase that catalyzes slow GTP hydrolysis, GTPase activity is stimulated by the 30S ribosomal subunit. The sequence is that of Small ribosomal subunit biogenesis GTPase RsgA from Clostridium botulinum (strain Okra / Type B1).